The chain runs to 280 residues: Borealin (280 aa).

A required for interaction with INCENP region spans residues 1–58 (MAPRKGSSRVAKTNSLRRRKLASFLKDFDREVEIRIKQIESDRQNLLKEVDNLYNIEI). The segment at 1–88 (MAPRKGSSRV…NKQALEEAAT (88 aa)) is required for centromere localization. The tract at residues 1–140 (MAPRKGSSRV…ENERKNLQTA (140 aa)) is required for interaction with SENP3. The segment at 10 to 109 (VAKTNSLRRR…TAEAIQTPLK (100 aa)) is required to form a minimal CPC core complex that localizes to the central spindle and midbody and properly executes the role of the CPC during cytokinesis. Positions 20–78 (KLASFLKDFDREVEIRIKQIESDRQNLLKEVDNLYNIEILRLPKALREMNWLDYFALGG) are required for interaction with INCENP and BIRC5. 2 positions are modified to phosphothreonine; by TTK: Thr-88 and Thr-94. Phosphothreonine is present on Thr-106. Ser-110 bears the Phosphoserine mark. The disordered stretch occupies residues 130–169 (EENERKNLQTARVKRCPPSKKRTQSIQGKGKGKRSSRANT). Lys-135 is covalently cross-linked (Glycyl lysine isopeptide (Lys-Gly) (interchain with G-Cter in SUMO2)). A compositionally biased stretch (basic residues) spans 141-152 (RVKRCPPSKKRT). Ser-165 is subject to Phosphoserine; by AURKB. At Thr-169 the chain carries Phosphothreonine; by TTK. Phosphothreonine is present on residues Thr-189 and Thr-204. A phosphoserine mark is found at Ser-219 and Ser-224. Residue Thr-230 is modified to Phosphothreonine; by TTK. Phosphoserine occurs at positions 238 and 244.

This sequence belongs to the borealin family. As to quaternary structure, may form homooligomers and homodimers. Component of the chromosomal passenger complex (CPC) composed of at least BIRC5/survivin, CDCA8/borealin, INCENP, AURKB or AURKC; in the complex forms a triple-helix bundle-based subcomplex with INCENP and BIRC5. Interacts with SENP3, UBE2I and RANBP2. Interacts (phosphorylated) with SGO1 and SGO2; the association is dependent on CDK1. In terms of processing, phosphorylated by TTK, essentially at Thr-88, Thr94, Thr-169 and Thr-230. Phosphorylation (probably by CDK1) promotes targeting of the CPC to centromeric DNA. Sumoylated by UBE2I and RANBP2. Desumoylated by SENP3 through the removal of SUMO2 and SUMO3.

It localises to the nucleus. Its subcellular location is the nucleolus. The protein localises to the cytoplasm. It is found in the chromosome. The protein resides in the centromere. It localises to the cytoskeleton. Its subcellular location is the spindle. Functionally, component of the chromosomal passenger complex (CPC), a complex that acts as a key regulator of mitosis. The CPC complex has essential functions at the centromere in ensuring correct chromosome alignment and segregation and is required for chromatin-induced microtubule stabilization and spindle assembly. In the complex, it may be required to direct the CPC to centromeric DNA. The polypeptide is Borealin (CDCA8) (Pongo abelii (Sumatran orangutan)).